The primary structure comprises 37 residues: Large ribosomal subunit protein bL36A (37 aa).

Belongs to the bacterial ribosomal protein bL36 family.

The polypeptide is Large ribosomal subunit protein bL36A (Clavibacter sepedonicus (Clavibacter michiganensis subsp. sepedonicus)).